The chain runs to 1181 residues: C5a peptidase (1181 aa).

An N-terminal signal peptide occupies residues 1–31 (MRKKQKLPFDKLAIALMSTSILLNAQSDIKA). Residues 33-52 (TVTEDTPATEQAVETPQPTA) are compositionally biased toward polar residues. The tract at residues 33-117 (TVTEDTPATE…PSQVKTLQEK (85 aa)) is disordered. Acidic residues predominate over residues 70 to 81 (DDAEETIADDAN). The Peptidase S8 domain occupies 99–581 (KATIRDLNDP…AGAVDAKKAS (483 aa)). Catalysis depends on charge relay system residues D130, H193, and S512. 4 stretches are compositionally biased toward basic and acidic residues: residues 1029-1054 (EGHS…KPEQ), 1061-1071 (PDKKPETKPEQ), 1078-1088 (PDKKPETKPEQ), and 1095-1107 (PDKK…EKDS). Positions 1029–1150 (EGHSNKPEQD…KDQLPTTNDK (122 aa)) are disordered. A run of 5 repeats spans residues 1034-1050 (KPEQ…KPET), 1051-1067 (KPEQ…KPET), 1068-1084 (KPEQ…KPET), 1085-1101 (KPEQ…KPET), and 1102-1118 (KPEK…TPQK). Residues 1034-1118 (KPEQDGSDQA…GQTPGKTPQK (85 aa)) form a 5 X 17 AA tandem repeats region. Composition is skewed to polar residues over residues 1109-1123 (GQTP…QPSR) and 1137-1147 (KASTKDQLPTT). An LPXTG sorting signal motif is present at residues 1144–1148 (LPTTN). Pentaglycyl murein peptidoglycan amidated threonine is present on T1147. Residues 1148–1181 (NDKDTNRLHLLKLVMTTFFLGLVAHIFKTKRTED) constitute a propeptide, removed by sortase.

This sequence belongs to the peptidase S8 family. In terms of processing, cleaved by SpeB protease; leading to its degradation. Degradation by SpeB is probably strictly regulated to preserve integrity of C5a peptidase.

The protein localises to the secreted. It localises to the cell wall. The enzyme catalyses The primary cleavage site is at 67-His-|-Lys-68 in human C5a with a minor secondary cleavage site at 58-Ala-|-Ser-59.. Functionally, this virulence factor of S.pyogenes specifically cleaves the human serum chemotaxin C5a at '68-Lys-|-Asp-69' bond near its C-terminus, destroying its ability to serve as a chemoattractant. This is C5a peptidase (scpA) from Streptococcus pyogenes serotype M1.